A 204-amino-acid chain; its full sequence is Large ribosomal subunit protein bL25 (204 aa).

The protein belongs to the bacterial ribosomal protein bL25 family. CTC subfamily. In terms of assembly, part of the 50S ribosomal subunit; part of the 5S rRNA/L5/L18/L25 subcomplex. Contacts the 5S rRNA. Binds to the 5S rRNA independently of L5 and L18.

In terms of biological role, this is one of the proteins that binds to the 5S RNA in the ribosome where it forms part of the central protuberance. This Burkholderia mallei (strain NCTC 10247) protein is Large ribosomal subunit protein bL25.